A 314-amino-acid chain; its full sequence is Hydroxyacyl-coenzyme A dehydrogenase, mitochondrial (314 aa).

Residues 1 to 12 (MAFVTRQFMRSV) constitute a mitochondrion transit peptide. Residues 34–39 (GGGLMG) and aspartate 57 each bind NAD(+). CoA contacts are provided by serine 73 and lysine 80. At lysine 80 the chain carries N6-succinyllysine. Lysine 81 and lysine 87 each carry N6-acetyllysine; alternate. N6-succinyllysine; alternate is present on residues lysine 81 and lysine 87. Position 122 (glutamate 122) interacts with NAD(+). Lysine 125 carries the N6-acetyllysine modification. Lysine 127 provides a ligand contact to NAD(+). The residue at position 127 (lysine 127) is an N6-(2-hydroxyisobutyryl)lysine. Lysine 136 bears the N6-acetyllysine; alternate mark. Lysine 136 is subject to N6-succinyllysine; alternate. NAD(+) contacts are provided by serine 149 and asparagine 173. A CoA-binding site is contributed by serine 149. Position 179 is an N6-acetyllysine (lysine 179). 3 positions are modified to N6-acetyllysine; alternate: lysine 185, lysine 192, and lysine 202. 3 positions are modified to N6-succinyllysine; alternate: lysine 185, lysine 192, and lysine 202. Residue lysine 206 is modified to N6-succinyllysine. Lysine 212 and lysine 241 each carry N6-acetyllysine; alternate. 2 positions are modified to N6-succinyllysine; alternate: lysine 212 and lysine 241. Lysine 305 contacts NAD(+). At lysine 312 the chain carries N6-acetyllysine; alternate. An N6-succinyllysine; alternate modification is found at lysine 312.

The protein belongs to the 3-hydroxyacyl-CoA dehydrogenase family. As to quaternary structure, homodimer. Interacts with GLUD1; this interaction inhibits the activation of glutamate dehydrogenase 1 (GLUD1). In terms of processing, succinylation at Lys-81, adjacent to a coenzyme A binding site. Desuccinylated by SIRT5. As to expression, expressed in liver, kidney, pancreas, heart and skeletal muscle.

It is found in the mitochondrion matrix. The enzyme catalyses a (3S)-3-hydroxyacyl-CoA + NAD(+) = a 3-oxoacyl-CoA + NADH + H(+). The catalysed reaction is (3S)-3-hydroxybutanoyl-CoA + NAD(+) = acetoacetyl-CoA + NADH + H(+). It catalyses the reaction (3S)-hydroxydecanoyl-CoA + NAD(+) = 3-oxodecanoyl-CoA + NADH + H(+). It carries out the reaction (3S)-hydroxyhexadecanoyl-CoA + NAD(+) = 3-oxohexadecanoyl-CoA + NADH + H(+). The protein operates within lipid metabolism; fatty acid beta-oxidation. In terms of biological role, mitochondrial fatty acid beta-oxidation enzyme that catalyzes the third step of the beta-oxidation cycle for medium and short-chain 3-hydroxy fatty acyl-CoAs (C4 to C10). Plays a role in the control of insulin secretion by inhibiting the activation of glutamate dehydrogenase 1 (GLUD1), an enzyme that has an important role in regulating amino acid-induced insulin secretion. Plays a role in the maintenance of normal spermatogenesis through the reduction of fatty acid accumulation in the testes. The polypeptide is Hydroxyacyl-coenzyme A dehydrogenase, mitochondrial (HADH) (Homo sapiens (Human)).